Consider the following 89-residue polypeptide: Large ribosomal subunit protein bL27 (89 aa).

Residues 1-21 (MAHKKSGGSSSNGRDSESKRL) form a disordered region.

Belongs to the bacterial ribosomal protein bL27 family.

The protein is Large ribosomal subunit protein bL27 of Caulobacter vibrioides (strain NA1000 / CB15N) (Caulobacter crescentus).